A 251-amino-acid polypeptide reads, in one-letter code: Imidazole glycerol phosphate synthase subunit HisF (251 aa).

Catalysis depends on residues D11 and D130.

Belongs to the HisA/HisF family. Heterodimer of HisH and HisF.

The protein localises to the cytoplasm. It catalyses the reaction 5-[(5-phospho-1-deoxy-D-ribulos-1-ylimino)methylamino]-1-(5-phospho-beta-D-ribosyl)imidazole-4-carboxamide + L-glutamine = D-erythro-1-(imidazol-4-yl)glycerol 3-phosphate + 5-amino-1-(5-phospho-beta-D-ribosyl)imidazole-4-carboxamide + L-glutamate + H(+). Its pathway is amino-acid biosynthesis; L-histidine biosynthesis; L-histidine from 5-phospho-alpha-D-ribose 1-diphosphate: step 5/9. In terms of biological role, IGPS catalyzes the conversion of PRFAR and glutamine to IGP, AICAR and glutamate. The HisF subunit catalyzes the cyclization activity that produces IGP and AICAR from PRFAR using the ammonia provided by the HisH subunit. The sequence is that of Imidazole glycerol phosphate synthase subunit HisF from Chlorobaculum tepidum (strain ATCC 49652 / DSM 12025 / NBRC 103806 / TLS) (Chlorobium tepidum).